Here is a 128-residue protein sequence, read N- to C-terminus: Small ribosomal subunit protein uS11 (128 aa).

It belongs to the universal ribosomal protein uS11 family. In terms of assembly, part of the 30S ribosomal subunit. Interacts with proteins S7 and S18. Binds to IF-3.

Located on the platform of the 30S subunit, it bridges several disparate RNA helices of the 16S rRNA. Forms part of the Shine-Dalgarno cleft in the 70S ribosome. This is Small ribosomal subunit protein uS11 from Synechococcus sp. (strain JA-3-3Ab) (Cyanobacteria bacterium Yellowstone A-Prime).